Consider the following 153-residue polypeptide: Cytochrome c-type biogenesis protein CcmE (153 aa).

Over 1 to 6 the chain is Cytoplasmic; the sequence is MNARRR. Residues 7–27 form a helical; Signal-anchor for type II membrane protein membrane-spanning segment; it reads LWSVLMLILAVGTAATLTIMA. Residues 28 to 153 are Periplasmic-facing; sequence LRHNLTYLYM…LDTPIAETTP (126 aa). Residues His-121 and Tyr-125 each coordinate heme. Residues 131-141 show a composition bias toward polar residues; that stretch reads ANKMQPTPTQH. The disordered stretch occupies residues 131-153; it reads ANKMQPTPTQHTHLDTPIAETTP.

It belongs to the CcmE/CycJ family.

Its subcellular location is the cell inner membrane. In terms of biological role, heme chaperone required for the biogenesis of c-type cytochromes. Transiently binds heme delivered by CcmC and transfers the heme to apo-cytochromes in a process facilitated by CcmF and CcmH. This is Cytochrome c-type biogenesis protein CcmE from Xylella fastidiosa (strain Temecula1 / ATCC 700964).